The chain runs to 547 residues: Type I inositol polyphosphate 5-phosphatase 4 (547 aa).

Residues 56–67 (CSVRKSKTETRS) are compositionally biased toward basic and acidic residues. The disordered stretch occupies residues 56-80 (CSVRKSKTETRSKRNSGRARRNKLD). Catalytic stretches follow at residues 387 to 402 (DRVI…IALS) and 467 to 482 (KRRT…WHGS).

This sequence belongs to the inositol polyphosphate 5-phosphatase family.

This is Type I inositol polyphosphate 5-phosphatase 4 from Arabidopsis thaliana (Mouse-ear cress).